A 363-amino-acid polypeptide reads, in one-letter code: NAD(P)H-quinone oxidoreductase subunit 1, chloroplastic (363 aa).

Helical transmembrane passes span 27–47 (VWLL…VLVI), 104–124 (IAVI…HLVL), 127–147 (LSIG…GLLM), 248–268 (YSGI…LVSS), 300–320 (VFGM…FLFI), and 343–363 (FLLP…LFSL).

It belongs to the complex I subunit 1 family. NDH is composed of at least 16 different subunits, 5 of which are encoded in the nucleus.

The protein localises to the plastid. The protein resides in the chloroplast thylakoid membrane. The catalysed reaction is a plastoquinone + NADH + (n+1) H(+)(in) = a plastoquinol + NAD(+) + n H(+)(out). It carries out the reaction a plastoquinone + NADPH + (n+1) H(+)(in) = a plastoquinol + NADP(+) + n H(+)(out). Functionally, NDH shuttles electrons from NAD(P)H:plastoquinone, via FMN and iron-sulfur (Fe-S) centers, to quinones in the photosynthetic chain and possibly in a chloroplast respiratory chain. The immediate electron acceptor for the enzyme in this species is believed to be plastoquinone. Couples the redox reaction to proton translocation, and thus conserves the redox energy in a proton gradient. This Ranunculus macranthus (Large buttercup) protein is NAD(P)H-quinone oxidoreductase subunit 1, chloroplastic.